The primary structure comprises 430 residues: Probable aspartic-type endopeptidase TRV_06366 (430 aa).

The first 17 residues, 1–17 (MHVSTLLVAVLLPLALS), serve as a signal peptide directing secretion. Residues 18–87 (KPTPRKKTSS…SKATAGSGKE (70 aa)) constitute a propeptide, activation peptide. Positions 61–104 (HEMEGYHPQPISKLPGNSKATAGSGKEGVESQDEKGEVVNNPTD) are disordered. Positions 87 to 104 (EGVESQDEKGEVVNNPTD) are enriched in basic and acidic residues. The Peptidase A1 domain maps to 109–427 (FLSPVTIGGQ…DQRGPSISLA (319 aa)). Asp-125 is a catalytic residue. The N-linked (GlcNAc...) asparagine glycan is linked to Asn-306. Asp-314 is a catalytic residue.

It belongs to the peptidase A1 family.

It localises to the secreted. Its function is as follows. Probable secreted aspartic-type endopeptidase which contributes to virulence. This chain is Probable aspartic-type endopeptidase TRV_06366, found in Trichophyton verrucosum (strain HKI 0517).